Here is a 289-residue protein sequence, read N- to C-terminus: Agroclavine dehydrogenase (289 aa).

This sequence belongs to the fgaFS/easG family. Monomer.

It catalyses the reaction agroclavine + NADP(+) = didehydroagroclavine + NADPH + H(+). The protein operates within alkaloid biosynthesis; ergot alkaloid biosynthesis. Functionally, agroclavine dehydrogenase; part of the gene cluster that mediates the biosynthesis of fungal ergot alkaloid ergovaline, the predominant ergopeptine product in E.festucae var. lolii. DmaW catalyzes the first step of ergot alkaloid biosynthesis by condensing dimethylallyl diphosphate (DMAP) and tryptophan to form 4-dimethylallyl-L-tryptophan. The second step is catalyzed by the methyltransferase easF that methylates 4-dimethylallyl-L-tryptophan in the presence of S-adenosyl-L-methionine, resulting in the formation of 4-dimethylallyl-L-abrine. The catalase easC and the FAD-dependent oxidoreductase easE then transform 4-dimethylallyl-L-abrine to chanoclavine-I which is further oxidized by easD in the presence of NAD(+), resulting in the formation of chanoclavine-I aldehyde. Agroclavine dehydrogenase easG then mediates the conversion of chanoclavine-I aldehyde to agroclavine via a non-enzymatic adduct reaction: the substrate is an iminium intermediate that is formed spontaneously from chanoclavine-I aldehyde in the presence of glutathione. Further conversion of agroclavine to paspalic acid is a two-step process involving oxidation of agroclavine to elymoclavine and of elymoclavine to paspalic acid, the second step being performed by the elymoclavine oxidase cloA. However, cloA does not encode a functional enzyme indicating that C.fusiformis terminates its ergot alkaloid pathway at elymoclavine. The protein is Agroclavine dehydrogenase of Claviceps fusiformis (Ergot fungus).